The following is a 300-amino-acid chain: Spermatogenesis-associated serine-rich protein 1 (300 aa).

The segment covering 1–10 (MSPSMLTGNS) has biased composition (polar residues). 2 disordered regions span residues 1-42 (MSPS…MTEV) and 64-91 (TPSG…LPRV). Residues 27-42 (QLEKVPEKRDSGMTEV) show a composition bias toward basic and acidic residues. Positions 64-85 (TPSGKSVSSSSSVETGPSVSEP) are enriched in low complexity. The residue at position 113 (serine 113) is a Phosphoserine.

The protein is Spermatogenesis-associated serine-rich protein 1 (SPATS1) of Homo sapiens (Human).